We begin with the raw amino-acid sequence, 359 residues long: Mitochondrial glutathione transporter SLC25A39 (359 aa).

Topologically, residues methionine 1–glutamine 14 are mitochondrial intermembrane. Solcar repeat units lie at residues isoleucine 9–phenylalanine 151, serine 159–tryptophan 243, and threonine 253–phenylalanine 347. Residues methionine 15–valine 35 form a helical membrane-spanning segment. The Mitochondrial matrix segment spans residues lysine 36–arginine 121. Positions 74, 78, 88, and 94 each coordinate [2Fe-2S] cluster. Residues threonine 122–phenylalanine 142 traverse the membrane as a helical segment. Residues threonine 143–aspartate 160 are Mitochondrial intermembrane-facing. The chain crosses the membrane as a helical span at residues leucine 161 to proline 181. Residues leucine 182–serine 214 lie on the Mitochondrial matrix side of the membrane. A helical membrane pass occupies residues leucine 215 to phenylalanine 235. Topologically, residues asparagine 236–serine 258 are mitochondrial intermembrane. Residues phenylalanine 259–valine 279 traverse the membrane as a helical segment. The Mitochondrial matrix portion of the chain corresponds to lysine 280 to lysine 317. Residues glycine 318–isoleucine 338 traverse the membrane as a helical segment. Over serine 339–glycine 359 the chain is Mitochondrial intermembrane.

Belongs to the mitochondrial carrier (TC 2.A.29) family. Post-translationally, cleaved and degraded by AFG3L2; degradation by AFG3L2 is regulated by the ability of SLC25A39 to bind iron-sulfur. In absence of mitochondrial glutathione, SLC25A39 binds iron-sulfur, preventing cleavage and degradation by AFG3L2. The presence of mitochondrial glutathione prevents iron-sulfur-binding to SLC25A39, promoting cleavage and degradation by AFG3L2. Expressed in many tissues. Abundant in testis and kidney.

It is found in the mitochondrion inner membrane. The enzyme catalyses glutathione(in) = glutathione(out). Its activity is regulated as follows. The activity of SLC25A39 is regulated by levels of mitochondrial glutathione via its ability to bind [2Fe-2S] iron-sulfur cluster. Upon physiological levels of mitochondrial glutathione, glutathione prevents iron-sulfur-binding to SLC25A39 promoting cleavage and degradation by AFG3L2. Upon depletion of mitochondrial glutathione, SLC25A39 binds iron-sulfur, preventing cleavage and degradation by AFG3L2. Its function is as follows. Mitochondrial transporter required for glutathione import into mitochondria. Glutathione, which plays key roles in oxidative metabolism, is produced exclusively in the cytosol and is imported in many organelles. Mitochondrial glutathione is required for the activity and stability of proteins containing iron-sulfur clusters, as well as erythropoiesis. This is Mitochondrial glutathione transporter SLC25A39 from Homo sapiens (Human).